Consider the following 312-residue polypeptide: Acetylglutamate kinase (312 aa).

Substrate is bound by residues Gly69–Gly70, Arg91, and Asn191.

Belongs to the acetylglutamate kinase family. ArgB subfamily.

It localises to the cytoplasm. It carries out the reaction N-acetyl-L-glutamate + ATP = N-acetyl-L-glutamyl 5-phosphate + ADP. It participates in amino-acid biosynthesis; L-arginine biosynthesis; N(2)-acetyl-L-ornithine from L-glutamate: step 2/4. Its function is as follows. Catalyzes the ATP-dependent phosphorylation of N-acetyl-L-glutamate. The chain is Acetylglutamate kinase from Streptomyces griseus subsp. griseus (strain JCM 4626 / CBS 651.72 / NBRC 13350 / KCC S-0626 / ISP 5235).